Here is a 398-residue protein sequence, read N- to C-terminus: Bifunctional enzyme IspD/IspF (398 aa).

A 2-C-methyl-D-erythritol 4-phosphate cytidylyltransferase region spans residues 1–234 (MTNSPRTAAI…SRLMAALGDI (234 aa)). The tract at residues 235–398 (RTGTGYDVHA…LPWGADGLAG (164 aa)) is 2-C-methyl-D-erythritol 2,4-cyclodiphosphate synthase. Residues aspartate 241 and histidine 243 each contribute to the a divalent metal cation site. 4-CDP-2-C-methyl-D-erythritol 2-phosphate contacts are provided by residues 241–243 (DVH) and 267–268 (HS). Histidine 275 is an a divalent metal cation binding site. 4-CDP-2-C-methyl-D-erythritol 2-phosphate-binding positions include 289 to 291 (DIG), 365 to 368 (TTSE), phenylalanine 372, and arginine 375.

In the N-terminal section; belongs to the IspD/TarI cytidylyltransferase family. IspD subfamily. It in the C-terminal section; belongs to the IspF family. It depends on a divalent metal cation as a cofactor.

The enzyme catalyses 2-C-methyl-D-erythritol 4-phosphate + CTP + H(+) = 4-CDP-2-C-methyl-D-erythritol + diphosphate. It catalyses the reaction 4-CDP-2-C-methyl-D-erythritol 2-phosphate = 2-C-methyl-D-erythritol 2,4-cyclic diphosphate + CMP. It participates in isoprenoid biosynthesis; isopentenyl diphosphate biosynthesis via DXP pathway; isopentenyl diphosphate from 1-deoxy-D-xylulose 5-phosphate: step 2/6. It functions in the pathway isoprenoid biosynthesis; isopentenyl diphosphate biosynthesis via DXP pathway; isopentenyl diphosphate from 1-deoxy-D-xylulose 5-phosphate: step 4/6. Functionally, bifunctional enzyme that catalyzes the formation of 4-diphosphocytidyl-2-C-methyl-D-erythritol from CTP and 2-C-methyl-D-erythritol 4-phosphate (MEP) (IspD), and catalyzes the conversion of 4-diphosphocytidyl-2-C-methyl-D-erythritol 2-phosphate (CDP-ME2P) to 2-C-methyl-D-erythritol 2,4-cyclodiphosphate (ME-CPP) with a corresponding release of cytidine 5-monophosphate (CMP) (IspF). This Rhodopseudomonas palustris (strain ATCC BAA-98 / CGA009) protein is Bifunctional enzyme IspD/IspF.